A 116-amino-acid polypeptide reads, in one-letter code: Class I hydrophobin 1 (116 aa).

The N-terminal stretch at 1-19 (MLFKQAILVATTLTTLAVA) is a signal peptide. 4 disulfides stabilise this stretch: Cys35–Cys95, Cys42–Cys89, Cys43–Cys76, and Cys96–Cys109. N-linked (GlcNAc...) asparagine glycans are attached at residues Asn44 and Asn100.

Belongs to the fungal hydrophobin family. As to quaternary structure, self-assembles to form functional amyloid fibrils called rodlets. Self-assembly into fibrillar rodlets occurs spontaneously at hydrophobic:hydrophilic interfaces and the rodlets further associate laterally to form amphipathic monolayers.

The protein localises to the secreted. It localises to the cell wall. Its function is as follows. Aerial growth, conidiation, and dispersal of filamentous fungi in the environment rely upon a capability of their secreting small amphipathic proteins called hydrophobins (HPBs) with low sequence identity. Class I can self-assemble into an outermost layer of rodlet bundles on aerial cell surfaces, conferring cellular hydrophobicity that supports fungal growth, development and dispersal; whereas Class II form highly ordered films at water-air interfaces through intermolecular interactions but contribute nothing to the rodlet structure. The chain is Class I hydrophobin 1 from Pleurotus ostreatus (strain PC15) (Oyster mushroom).